Reading from the N-terminus, the 147-residue chain is UPF0306 protein YPTB0506 (147 aa).

It belongs to the UPF0306 family.

This chain is UPF0306 protein YPTB0506, found in Yersinia pseudotuberculosis serotype I (strain IP32953).